Here is a 610-residue protein sequence, read N- to C-terminus: DNA mismatch repair protein MutL (610 aa).

Belongs to the DNA mismatch repair MutL/HexB family.

Functionally, this protein is involved in the repair of mismatches in DNA. It is required for dam-dependent methyl-directed DNA mismatch repair. May act as a 'molecular matchmaker', a protein that promotes the formation of a stable complex between two or more DNA-binding proteins in an ATP-dependent manner without itself being part of a final effector complex. The protein is DNA mismatch repair protein MutL of Rickettsia peacockii (strain Rustic).